The primary structure comprises 196 residues: Large ribosomal subunit protein eL15 (196 aa).

Residues 155-196 form a disordered region; sequence THRGRAERGLTSAGKKGRGQRRKGKGTEKNYPSVQAHDRRGK. Residues 169–178 show a composition bias toward basic residues; sequence KKGRGQRRKG.

This sequence belongs to the eukaryotic ribosomal protein eL15 family.

This Methanocella arvoryzae (strain DSM 22066 / NBRC 105507 / MRE50) protein is Large ribosomal subunit protein eL15.